Consider the following 334-residue polypeptide: 3-ketodihydrosphingosine reductase (334 aa).

An N-terminal signal peptide occupies residues 1 to 20; the sequence is MIIYILFSLLAAVIVHLVYK. Residues G36, S38, S39, G40, R62, K66, D100, and I101 each contribute to the NADPH site. The GXSXG signature appears at 36-40; that stretch reads GGSSG. S182 acts as the Proton donor in catalysis. Y196 serves as the catalytic Proton acceptor. The NADP(+) site is built by Y196 and K200. Residue K200 is the Lowers pKa of active site Tyr of the active site.

It belongs to the short-chain dehydrogenases/reductases (SDR) family.

It is found in the endoplasmic reticulum. The catalysed reaction is sphinganine + NADP(+) = 3-oxosphinganine + NADPH + H(+). It participates in lipid metabolism; sphingolipid metabolism. Its function is as follows. Catalyzes the reduction of 3'-oxosphinganine (3-ketodihydrosphingosine/KDS) to sphinganine (dihydrosphingosine/DHS), the second step of de novo sphingolipid biosynthesis. The polypeptide is 3-ketodihydrosphingosine reductase (ksrA-1) (Dictyostelium discoideum (Social amoeba)).